The sequence spans 402 residues: Speedy protein E5 (402 aa).

The tract at residues 1–89 (MDRTETRFRK…EEPEKELAPE (89 aa)) is disordered. The span at 16–39 (EKITTSRQPQPQNEQSPQRSTSGY) shows a compositional bias: polar residues. The span at 76–89 (DESAEEPEKELAPE) shows a compositional bias: acidic residues.

Belongs to the Speedy/Ringo family.

The protein is Speedy protein E5 (SPDYE5) of Homo sapiens (Human).